The primary structure comprises 315 residues: Methionyl-tRNA formyltransferase (315 aa).

Positions 2-189 (SDSLRIIFAG…LITTLKQLAD (188 aa)) are N-terminal domain. 113–116 (SLLP) lines the (6S)-5,6,7,8-tetrahydrofolate pocket. Positions 210-315 (KEEARIDWSL…EWFIPGNRLA (106 aa)) are C-terminal domain.

It belongs to the Fmt family.

It catalyses the reaction L-methionyl-tRNA(fMet) + (6R)-10-formyltetrahydrofolate = N-formyl-L-methionyl-tRNA(fMet) + (6S)-5,6,7,8-tetrahydrofolate + H(+). Its function is as follows. Attaches a formyl group to the free amino group of methionyl-tRNA(fMet). The formyl group appears to play a dual role in the initiator identity of N-formylmethionyl-tRNA by promoting its recognition by IF2 and preventing the misappropriation of this tRNA by the elongation apparatus. This is Methionyl-tRNA formyltransferase from Salmonella choleraesuis (strain SC-B67).